Reading from the N-terminus, the 211-residue chain is uncharacterized protein (211 aa).

The Cytoplasmic segment spans residues Met1–Arg33. The chain crosses the membrane as a helical span at residues Leu34–Leu54. At Thr55 to Asn58 the chain is on the lumenal side. Residues Thr59 to Met79 form a helical membrane-spanning segment. Over Glu80 to Asn116 the chain is Cytoplasmic. A helical transmembrane segment spans residues Trp117–Ala137. The Lumenal segment spans residues Ser138–Leu162. A helical membrane pass occupies residues Gly163–Phe183. Topologically, residues Lys184–Leu211 are cytoplasmic.

It is found in the endoplasmic reticulum membrane. This is an uncharacterized protein from Saccharomyces cerevisiae (strain ATCC 204508 / S288c) (Baker's yeast).